A 183-amino-acid chain; its full sequence is UPF0134 protein MPN_100 (183 aa).

Belongs to the UPF0134 family.

This Mycoplasma pneumoniae (strain ATCC 29342 / M129 / Subtype 1) (Mycoplasmoides pneumoniae) protein is UPF0134 protein MPN_100.